A 197-amino-acid chain; its full sequence is MDFIFPLISYLLGAIPFGLLIGKLAGRDVRLEGSKNIGATNVSRILGKKLGFATLLCDSLKGFLPMVLAATLLPSSENRELIVCLSGVMGVLGHMFPVYLGFKGGKGVATGLGVFLFLSPAAIAISLGVFAASVFFSGFVSVGSLLASGLIPLWLYLLGASQLKIITAGFVALLIWIKHRKNIKRLMTGTEKSWKKK.

5 helical membrane-spanning segments follow: residues 1 to 21 (MDFI…GLLI), 50 to 70 (LGFA…VLAA), 82 to 102 (IVCL…YLGF), 112 to 132 (LGVF…VFAA), and 159 to 179 (GASQ…WIKH).

It belongs to the PlsY family. Probably interacts with PlsX.

The protein resides in the cell inner membrane. It carries out the reaction an acyl phosphate + sn-glycerol 3-phosphate = a 1-acyl-sn-glycero-3-phosphate + phosphate. It participates in lipid metabolism; phospholipid metabolism. Its function is as follows. Catalyzes the transfer of an acyl group from acyl-phosphate (acyl-PO(4)) to glycerol-3-phosphate (G3P) to form lysophosphatidic acid (LPA). This enzyme utilizes acyl-phosphate as fatty acyl donor, but not acyl-CoA or acyl-ACP. The chain is Glycerol-3-phosphate acyltransferase from Desulfotalea psychrophila (strain LSv54 / DSM 12343).